The sequence spans 349 residues: Nuclear distribution protein nudE homolog 1-B (349 aa).

Residues 22–189 (VAMKYKQCSE…ELAVQQKQEK (168 aa)) are a coiled coil.

It belongs to the nudE family. In terms of assembly, self-associates. Interacts with pafah1b1. Post-translationally, phosphorylated in mitosis.

It is found in the cytoplasm. The protein resides in the cytoskeleton. Its subcellular location is the microtubule organizing center. It localises to the centrosome. The protein localises to the spindle. It is found in the chromosome. The protein resides in the centromere. Its subcellular location is the kinetochore. It localises to the cleavage furrow. The protein localises to the cytoplasmic vesicle membrane. Required for centrosome duplication and formation and function of the mitotic spindle. The polypeptide is Nuclear distribution protein nudE homolog 1-B (nde1-b) (Xenopus laevis (African clawed frog)).